Reading from the N-terminus, the 556-residue chain is Formate--tetrahydrofolate ligase (556 aa).

Residue 65–72 (TPAGEGKS) participates in ATP binding.

It belongs to the formate--tetrahydrofolate ligase family.

It catalyses the reaction (6S)-5,6,7,8-tetrahydrofolate + formate + ATP = (6R)-10-formyltetrahydrofolate + ADP + phosphate. The protein operates within one-carbon metabolism; tetrahydrofolate interconversion. This Streptococcus thermophilus (strain ATCC BAA-491 / LMD-9) protein is Formate--tetrahydrofolate ligase.